Here is a 139-residue protein sequence, read N- to C-terminus: D-ribose pyranase (139 aa).

Catalysis depends on histidine 20, which acts as the Proton donor. Substrate contacts are provided by residues aspartate 28, histidine 106, and 128–130 (YAN).

This sequence belongs to the RbsD / FucU family. RbsD subfamily. Homodecamer.

Its subcellular location is the cytoplasm. The enzyme catalyses beta-D-ribopyranose = beta-D-ribofuranose. It participates in carbohydrate metabolism; D-ribose degradation; D-ribose 5-phosphate from beta-D-ribopyranose: step 1/2. Its function is as follows. Catalyzes the interconversion of beta-pyran and beta-furan forms of D-ribose. The protein is D-ribose pyranase of Salmonella choleraesuis (strain SC-B67).